The sequence spans 473 residues: UTP--glucose-1-phosphate uridylyltransferase (473 aa).

UTP is bound by residues 89-92 (LNGG), K103, Q166, and G195. 91 to 92 (GG) is a binding site for substrate. Substrate is bound by residues H196 and 224-226 (NSD). Residues D226 and K364 each coordinate UTP.

Belongs to the UDPGP type 1 family.

The protein localises to the cytoplasm. The catalysed reaction is alpha-D-glucose 1-phosphate + UTP + H(+) = UDP-alpha-D-glucose + diphosphate. Functionally, plays a central role as a glucosyl donor in cellular metabolic pathways. The sequence is that of UTP--glucose-1-phosphate uridylyltransferase from Hordeum vulgare (Barley).